We begin with the raw amino-acid sequence, 605 residues long: DNA primase (605 aa).

The segment at 38-62 (CPFHDEKTPSFTVSEDKQICHCFGC) adopts a CHC2-type zinc-finger fold. A Toprim domain is found at 260–341 (DEIVLLEGFM…NVFVIQLPSG (82 aa)). The Mg(2+) site is built by glutamate 266, aspartate 310, and aspartate 312.

It belongs to the DnaG primase family. As to quaternary structure, monomer. Interacts with DnaB. Requires Zn(2+) as cofactor. Mg(2+) serves as cofactor.

The catalysed reaction is ssDNA + n NTP = ssDNA/pppN(pN)n-1 hybrid + (n-1) diphosphate.. Functionally, RNA polymerase that catalyzes the synthesis of short RNA molecules used as primers for DNA polymerase during DNA replication. This chain is DNA primase, found in Staphylococcus aureus (strain MW2).